A 282-amino-acid chain; its full sequence is Cuticle collagen 8 (282 aa).

The N-terminal stretch at 1–24 is a signal peptide; that stretch reads MLVCVFVALYTMMGLLTDIKQLQS. The interval 86–282 is disordered; it reads GPKSEGCPAG…CPCPGRSYKA (197 aa). Triple-helical region stretches follow at residues 95–124 and 141–269; these read GPPGPPGEGGQSGEPGHDGDDGKPGAPGVI and GRPG…PGPD. Positions 170–180 are enriched in gly residues; that stretch reads TGGQGGPGEQG. The span at 214-224 shows a compositional bias: pro residues; the sequence is PPGPRGPPGPE. Residues 225-234 show a composition bias toward gly residues; the sequence is GNPGGAGEDG. The segment covering 235 to 244 has biased composition (low complexity); it reads NQGPVGHPGV.

The protein belongs to the cuticular collagen family. Collagen polypeptide chains are complexed within the cuticle by disulfide bonds and other types of covalent cross-links.

In terms of biological role, nematode cuticles are composed largely of collagen-like proteins. The cuticle functions both as an exoskeleton and as a barrier to protect the worm from its environment. In Caenorhabditis elegans, this protein is Cuticle collagen 8 (col-8).